A 197-amino-acid polypeptide reads, in one-letter code: ATP-dependent Clp protease proteolytic subunit 2 (197 aa).

The Nucleophile role is filled by serine 97. Residue histidine 122 is part of the active site.

It belongs to the peptidase S14 family. In terms of assembly, fourteen ClpP subunits assemble into 2 heptameric rings which stack back to back to give a disk-like structure with a central cavity, resembling the structure of eukaryotic proteasomes.

The protein resides in the cytoplasm. It carries out the reaction Hydrolysis of proteins to small peptides in the presence of ATP and magnesium. alpha-casein is the usual test substrate. In the absence of ATP, only oligopeptides shorter than five residues are hydrolyzed (such as succinyl-Leu-Tyr-|-NHMec, and Leu-Tyr-Leu-|-Tyr-Trp, in which cleavage of the -Tyr-|-Leu- and -Tyr-|-Trp bonds also occurs).. Cleaves peptides in various proteins in a process that requires ATP hydrolysis. Has a chymotrypsin-like activity. Plays a major role in the degradation of misfolded proteins. The protein is ATP-dependent Clp protease proteolytic subunit 2 of Leptospira interrogans serogroup Icterohaemorrhagiae serovar copenhageni (strain Fiocruz L1-130).